Consider the following 341-residue polypeptide: IYRMHANKREEIESVGAGDIVAVMGLKQTTTGETLSDEKSPVILESMDFPAPVIQVAIEPKSKGDQEKLGVAIQRLAEEDPSFQVHSDEETGQTIIGGMGELHLEVLVDRMRREFKVEANVGKPQVAYRETIRQAVEKVEYTHKKQTGGTGQFARVIIAIEPIESGDTSYEFVNKVTGGRVPKEYIPSVDAGAQEAMQFGILAGYEMTGVRVTLLDGAYHEVDSSELAFKIAGSQAFKEAARKAKPVLLEPMMAVEVTTPEDYMGEVIGDINSRRGQIQAMEERAGARVVKGLVPLSEMFGYVGDLRSKTSGRASYSMQFDSYAEVPRNVAEEIIAKAKGE.

This sequence belongs to the GTP-binding elongation factor family. EF-G/EF-2 subfamily.

It is found in the cytoplasm. Its function is as follows. Catalyzes the GTP-dependent ribosomal translocation step during translation elongation. During this step, the ribosome changes from the pre-translocational (PRE) to the post-translocational (POST) state as the newly formed A-site-bound peptidyl-tRNA and P-site-bound deacylated tRNA move to the P and E sites, respectively. Catalyzes the coordinated movement of the two tRNA molecules, the mRNA and conformational changes in the ribosome. In Streptomyces ramocissimus, this protein is Elongation factor G (fus).